A 720-amino-acid chain; its full sequence is Serine/threonine-protein kinase KIN82 (720 aa).

2 stretches are compositionally biased toward polar residues: residues 1-13 (MTQQEYRSPSQRL) and 99-116 (FNHNRSKSSGTTDASTSE). 2 disordered regions span residues 1-20 (MTQQEYRSPSQRLSKGRSMS) and 99-128 (FNHNRSKSSGTTDASTSEKGTHKREPRSTI). A Phosphoserine modification is found at serine 203. Positions 230-241 (SPLANLSLSNSP) are enriched in low complexity. Residues 230 to 257 (SPLANLSLSNSPIDSPRKNSETRKDQIP) are disordered. The segment covering 244-255 (SPRKNSETRKDQ) has biased composition (basic and acidic residues). Residues 324 to 602 (FEKIRLLGQG…AADIKRHPFF (279 aa)) form the Protein kinase domain. ATP is bound by residues 330 to 338 (LGQGDVGKV) and lysine 353. The active-site Proton acceptor is the aspartate 449.

This sequence belongs to the protein kinase superfamily. Ser/Thr protein kinase family. KIN82 subfamily.

It carries out the reaction L-seryl-[protein] + ATP = O-phospho-L-seryl-[protein] + ADP + H(+). It catalyses the reaction L-threonyl-[protein] + ATP = O-phospho-L-threonyl-[protein] + ADP + H(+). In terms of biological role, flippase activator that phosphorylates DFN1 and DFN2 and which is involved in the generation of phospholipid asymmetry in membranes by the inward translocation of phospholipids. In Saccharomyces cerevisiae (strain ATCC 204508 / S288c) (Baker's yeast), this protein is Serine/threonine-protein kinase KIN82 (KIN82).